The primary structure comprises 348 residues: Dihydroorotase (348 aa).

H14 and H16 together coordinate Zn(2+). Residues 16 to 18 (HLR) and N42 contribute to the substrate site. Residues K100, H137, and H175 each contribute to the Zn(2+) site. Residue K100 is modified to N6-carboxylysine. A substrate-binding site is contributed by H137. A substrate-binding site is contributed by L220. D248 contacts Zn(2+). D248 is an active-site residue. Positions 252 and 264 each coordinate substrate.

It belongs to the metallo-dependent hydrolases superfamily. DHOase family. Class II DHOase subfamily. Homodimer. Zn(2+) serves as cofactor.

The catalysed reaction is (S)-dihydroorotate + H2O = N-carbamoyl-L-aspartate + H(+). The protein operates within pyrimidine metabolism; UMP biosynthesis via de novo pathway; (S)-dihydroorotate from bicarbonate: step 3/3. In terms of biological role, catalyzes the reversible cyclization of carbamoyl aspartate to dihydroorotate. The sequence is that of Dihydroorotase from Pseudomonas paraeruginosa (strain DSM 24068 / PA7) (Pseudomonas aeruginosa (strain PA7)).